A 305-amino-acid polypeptide reads, in one-letter code: Oxygen-dependent coproporphyrinogen-III oxidase (305 aa).

Serine 98 lines the substrate pocket. The a divalent metal cation site is built by histidine 102 and histidine 112. Histidine 112 serves as the catalytic Proton donor. 114–116 is a binding site for substrate; sequence NVR. Histidine 151 and histidine 181 together coordinate a divalent metal cation. Residues 246–281 are important for dimerization; it reads YVEFNLVYDRGTLFGLQSGGRTESILMSMPPLARWE. 264 to 266 contributes to the substrate binding site; that stretch reads GGR.

The protein belongs to the aerobic coproporphyrinogen-III oxidase family. In terms of assembly, homodimer. It depends on a divalent metal cation as a cofactor.

The protein localises to the cytoplasm. It catalyses the reaction coproporphyrinogen III + O2 + 2 H(+) = protoporphyrinogen IX + 2 CO2 + 2 H2O. The protein operates within porphyrin-containing compound metabolism; protoporphyrin-IX biosynthesis; protoporphyrinogen-IX from coproporphyrinogen-III (O2 route): step 1/1. In terms of biological role, involved in the heme biosynthesis. Catalyzes the aerobic oxidative decarboxylation of propionate groups of rings A and B of coproporphyrinogen-III to yield the vinyl groups in protoporphyrinogen-IX. The chain is Oxygen-dependent coproporphyrinogen-III oxidase from Vibrio parahaemolyticus serotype O3:K6 (strain RIMD 2210633).